A 727-amino-acid polypeptide reads, in one-letter code: Long-chain-fatty-acid--[acyl-carrier-protein] ligase AEE15, chloroplastic (727 aa).

A chloroplast-targeting transit peptide spans 1-66 (MQIRLKPDYS…PSFRRFRVHC (66 aa)).

It belongs to the ATP-dependent AMP-binding enzyme family.

It is found in the plastid. Its subcellular location is the chloroplast. It catalyses the reaction a long-chain fatty acid + holo-[ACP] + ATP = a long-chain fatty acyl-[ACP] + AMP + diphosphate. In terms of biological role, probably involved in the activation of fatty acids to acyl-carrier-protein prior to fatty acid elongation in plastids. Acts on medium- to long-chain fatty acids. The polypeptide is Long-chain-fatty-acid--[acyl-carrier-protein] ligase AEE15, chloroplastic (AAE15) (Arabidopsis thaliana (Mouse-ear cress)).